The sequence spans 1066 residues: MTDQENNNNISSNPFAALFGSLADAKQFAAIQKEQLKQQSDELPASPDDSDNSVSESLDEFDYSVAEISRSFRSQQEICEQLNINHMIQRIFLITLDNSDPSLKSGNGIPSRCVYLEEMAVELEDQDWLDMGNVEQALFARLLLQDPGNHLINMTSSTTLNLSADRDAGERHIFCYLYSCFQRAKEEITKVPENLLPFAVQCRNLTVSNTRTVLLTPEIYVDQNIHEQLVDLMLEAIQGAHFEDVTEFLEEVIEALILDEEVRTFSEVMIPVFDILLGRIKDLELCQILLYAYLDILLYFTRQKDMAKVFVEYIQPKDPTNGQMYQKTLLGVILNISCLLKTPGVVENHGYFLNPSRSSPQEIKVQEANIHQFMAQFHEKIYQMLKNLLQLSPETKHCILSWLGNCLHANAGRTKIWANQMPEIFFQMYASDAFFLNLGAALLKLCQPFCKPRSSRLLTFNPTYCALKELNDEERKIKNVHMRGLDKETCLIPAVQEPKFPQNYNLVTENLALTEYTLYLGFHRLHDQMVKINQNLHRLQVAWRDAQQSSSPAADSLREQFERLMTIYLSTKTAMTEPQMLQNCLNLQVSMAVLLVQLAIGNEGSQPIELTFPLPDGYSSLAYVPEFFADNLGDFLIFLRRFADDILETSADSLEHVLHFITIFTGSIERMKNPHLRAKLAEVLEAVMPHLDQTPNPLVSSVFHRKRVFCNFQYAPQLAEALIKVFVDIEFTGDPHQFEQKFNYRRPMYPILRYMWGTDTYRESIKDLADYASKNLEAMNPPLFLRFLNLLMNDAIFLLDEAIQYLSKIKIQQIEKDRGEWDSLTPEARREKEAGLQMFGQLARFHNIMSNETIGTLAFLTSEIKSLFVHPFLAERIISMLNYFLQHLVGPKMGALKVKDFSEFDFKPQQLVSDICTIYLNLGDEENFCATVPKDGRSYSPTLFAQTVRVLKKINKPGNMIVAFSNLAERIKSLADLQQQEEETYADACDEFLDPIMSTLMCDPVVLPSSRVTVDRSTIARHLLSDQTDPFNRSPLTMDQIRPNTELKEKIQRWLAERKQQKEQLE.

Positions 33–57 (KEQLKQQSDELPASPDDSDNSVSES) are disordered. Lys-386 carries the N6-acetyllysine modification. Residues 987 to 1061 (DACDEFLDPI…QRWLAERKQQ (75 aa)) enclose the U-box domain.

The protein belongs to the ubiquitin conjugation factor E4 family.

It is found in the cytoplasm. It catalyses the reaction S-ubiquitinyl-[E2 ubiquitin-conjugating enzyme]-L-cysteine + [acceptor protein]-L-lysine = [E2 ubiquitin-conjugating enzyme]-L-cysteine + N(6)-ubiquitinyl-[acceptor protein]-L-lysine.. It functions in the pathway protein modification; protein ubiquitination. Its function is as follows. Ubiquitin-protein ligase that probably functions as an E3 ligase in conjunction with specific E1 and E2 ligases. May also function as an E4 ligase mediating the assembly of polyubiquitin chains on substrates ubiquitinated by another E3 ubiquitin ligase. Mediates 'Lys-48'-linked polyubiquitination of substrates. This Pongo abelii (Sumatran orangutan) protein is Ubiquitin conjugation factor E4 A.